The following is a 231-amino-acid chain: Urease subunit gamma/beta (231 aa).

The urease gamma stretch occupies residues 1 to 101; that stretch reads MLLTPTELER…LVTVHQPIRP (101 aa). The tract at residues 102–231 is urease beta; sequence GQLPLAVMPT…RARAQFFKGA (130 aa).

In the N-terminal section; belongs to the urease gamma subunit family. This sequence in the C-terminal section; belongs to the urease beta subunit family. As to quaternary structure, heterohexamer of 3 UreC (alpha) and 3 UreAB (gamma/beta) subunits.

It is found in the cytoplasm. It catalyses the reaction urea + 2 H2O + H(+) = hydrogencarbonate + 2 NH4(+). It functions in the pathway nitrogen metabolism; urea degradation; CO(2) and NH(3) from urea (urease route): step 1/1. The sequence is that of Urease subunit gamma/beta from Pseudomonas syringae pv. syringae (strain B728a).